Consider the following 92-residue polypeptide: PqqA binding protein (92 aa).

This sequence belongs to the PqqD family. In terms of assembly, monomer. Interacts with PqqE.

It participates in cofactor biosynthesis; pyrroloquinoline quinone biosynthesis. Functionally, functions as a PqqA binding protein and presents PqqA to PqqE, in the pyrroloquinoline quinone (PQQ) biosynthetic pathway. The chain is PqqA binding protein from Xanthomonas oryzae pv. oryzae (strain MAFF 311018).